The chain runs to 94 residues: Sec-independent protein translocase protein TatA (94 aa).

A helical transmembrane segment spans residues 1–21 (MFGRLGAPEIILILVVIILLF). A disordered region spans residues 44-94 (AKAMKSEGQESTPAGPPNTDEQPPAQRTIQAAPGDVTSSRPVSEPTDTTKR). The segment covering 62–72 (TDEQPPAQRTI) has biased composition (polar residues).

It belongs to the TatA/E family. In terms of assembly, the Tat system comprises two distinct complexes: a TatABC complex, containing multiple copies of TatA, TatB and TatC subunits, and a separate TatA complex, containing only TatA subunits. Substrates initially bind to the TatABC complex, which probably triggers association of the separate TatA complex to form the active translocon.

It is found in the cell membrane. Part of the twin-arginine translocation (Tat) system that transports large folded proteins containing a characteristic twin-arginine motif in their signal peptide across membranes. TatA could form the protein-conducting channel of the Tat system. This Streptomyces avermitilis (strain ATCC 31267 / DSM 46492 / JCM 5070 / NBRC 14893 / NCIMB 12804 / NRRL 8165 / MA-4680) protein is Sec-independent protein translocase protein TatA.